The sequence spans 388 residues: MEPSPAAGGLETTRLVSPRDRGGAGGSLRLKSLFTEPSEPLPEESKPVEMPFHHCHRDPLPPPGLTPERLHARRQLYAACAVCFVFMAGEVVGGYLAHSLAIMTDAAHLLADVGSMMGSLFSLWLSTRPATRTMTFGWHRSETLGALASVVSLWMVTGILLYLAFVRLLHSDYHIEGGAMLLTASIAVCANLLMAFVLHQAGPPHSHGSRGAEYAPLEEGPEEPLPLGNTSVRAAFVHVLGDLLQSFGVLAASILIYFKPQYKAADPISTFLFSICALGSTAPTLRDVLRILMEGTPRNVGFEPVRDTLLSVPGVRATHELHLWALTLTYHVASAHLAIDSTADPEAVLAEASSRLYSRFGFSSCTLQVEQYQPEMAQCLRCQEPPQA.

The segment at 1–46 is disordered; the sequence is MEPSPAAGGLETTRLVSPRDRGGAGGSLRLKSLFTEPSEPLPEESK. At 1–75 the chain is on the cytoplasmic side; sequence MEPSPAAGGL…TPERLHARRQ (75 aa). The helical transmembrane segment at 76-96 threads the bilayer; the sequence is LYAACAVCFVFMAGEVVGGYL. Over 97–105 the chain is Lumenal; the sequence is AHSLAIMTD. Residues 106–126 traverse the membrane as a helical segment; sequence AAHLLADVGSMMGSLFSLWLS. Histidine 108 and aspartate 112 together coordinate Zn(2+). Residues 127-145 lie on the Cytoplasmic side of the membrane; it reads TRPATRTMTFGWHRSETLG. A helical transmembrane segment spans residues 146-166; that stretch reads ALASVVSLWMVTGILLYLAFV. The Lumenal segment spans residues 167 to 177; sequence RLLHSDYHIEG. The helical transmembrane segment at 178 to 198 threads the bilayer; that stretch reads GAMLLTASIAVCANLLMAFVL. At 199–235 the chain is on the cytoplasmic side; sequence HQAGPPHSHGSRGAEYAPLEEGPEEPLPLGNTSVRAA. The chain crosses the membrane as a helical span at residues 236–256; that stretch reads FVHVLGDLLQSFGVLAASILI. The Zn(2+) site is built by histidine 238 and aspartate 242. Residues 257–264 are Lumenal-facing; the sequence is YFKPQYKA. Residues 265–285 traverse the membrane as a helical segment; it reads ADPISTFLFSICALGSTAPTL. Over 286–388 the chain is Cytoplasmic; that stretch reads RDVLRILMEG…CLRCQEPPQA (103 aa). Tyrosine 357 is covalently cross-linked (Dityrosine (Tyr-Tyr) (interchain with Y-372)). Tyrosine 372 participates in a covalent cross-link: Dityrosine (Tyr-Tyr) (interchain with Y-357).

Belongs to the cation diffusion facilitator (CDF) transporter (TC 2.A.4) family. SLC30A subfamily. Homodimer; dityrosine-linked. Homodimerization seems specific of the human protein and enhances the zinc transport efficiency. Interacts with TMEM163. In terms of processing, homodimerization through dityrosine bonds is stimulated by oxidative stress.

The protein resides in the cytoplasmic vesicle. It is found in the secretory vesicle. The protein localises to the synaptic vesicle membrane. It localises to the synapse. Its subcellular location is the synaptosome. The protein resides in the late endosome membrane. It is found in the lysosome membrane. The enzyme catalyses Zn(2+)(in) + 2 H(+)(out) = Zn(2+)(out) + 2 H(+)(in). Functionally, probable proton-coupled zinc ion antiporter mediating the import of zinc from cytoplasm into synaptic vesicles and participating to cellular zinc ion homeostasis in the brain. This chain is Probable proton-coupled zinc antiporter SLC30A3, found in Homo sapiens (Human).